A 637-amino-acid polypeptide reads, in one-letter code: Phosphomethylpyrimidine synthase (637 aa).

Substrate-binding positions include Asn-242, Met-271, Tyr-300, His-336, Ser-356–Gly-358, Asp-397–Arg-400, and Glu-436. His-440 is a binding site for Zn(2+). Residue Tyr-463 participates in substrate binding. Position 504 (His-504) interacts with Zn(2+). [4Fe-4S] cluster-binding residues include Cys-584, Cys-587, and Cys-592.

Belongs to the ThiC family. Homodimer. [4Fe-4S] cluster is required as a cofactor.

The enzyme catalyses 5-amino-1-(5-phospho-beta-D-ribosyl)imidazole + S-adenosyl-L-methionine = 4-amino-2-methyl-5-(phosphooxymethyl)pyrimidine + CO + 5'-deoxyadenosine + formate + L-methionine + 3 H(+). The protein operates within cofactor biosynthesis; thiamine diphosphate biosynthesis. Its function is as follows. Catalyzes the synthesis of the hydroxymethylpyrimidine phosphate (HMP-P) moiety of thiamine from aminoimidazole ribotide (AIR) in a radical S-adenosyl-L-methionine (SAM)-dependent reaction. This Herminiimonas arsenicoxydans protein is Phosphomethylpyrimidine synthase.